Here is a 407-residue protein sequence, read N- to C-terminus: Phosphoglycerate kinase (407 aa).

Substrate-binding positions include 27-29 (DLN), Arg43, 66-69 (HLGR), Arg125, and Arg165. Residues Lys215, Gly303, Glu334, and 363 to 366 (GGDS) contribute to the ATP site.

This sequence belongs to the phosphoglycerate kinase family. Monomer.

The protein resides in the cytoplasm. The catalysed reaction is (2R)-3-phosphoglycerate + ATP = (2R)-3-phospho-glyceroyl phosphate + ADP. It functions in the pathway carbohydrate degradation; glycolysis; pyruvate from D-glyceraldehyde 3-phosphate: step 2/5. This Mycobacterium sp. (strain JLS) protein is Phosphoglycerate kinase.